An 84-amino-acid polypeptide reads, in one-letter code: Cysteine-rich protamine (84 aa).

Intrachain disulfides connect cysteine 16/cysteine 24 and cysteine 64/cysteine 80.

As to quaternary structure, cross-linked by interchain disulfide bonds around the DNA-helix. In terms of tissue distribution, testis.

The protein localises to the nucleus. It is found in the chromosome. In terms of biological role, protamines substitute for histones in the chromatin of sperm during the haploid phase of spermatogenesis. They compact sperm DNA into a highly condensed, stable and inactive complex. This protamine condenses spermiogenic chromatin in a pattern which comprises fibers with a progressively larger diameter and lamellae that finally undergo definitive coalescence. This Eledone cirrhosa (Curled octopus) protein is Cysteine-rich protamine.